The following is a 158-amino-acid chain: MKTPLVTREGYEKLKQELNYLWREERPEVTKKVTWAASLGDRSENADYQYNKKRLREIDRRVRYLTKCLENLKIVDYSPQQEGKVFFGAWVEIENDDGVTHRFRIVGYDEIFGRKDYISIDSPMARALLKKEVGDLAVVNTPAGEASWYVNAIEYVKP.

The protein belongs to the GreA/GreB family. GreB subfamily.

In terms of biological role, necessary for efficient RNA polymerase transcription elongation past template-encoded arresting sites. The arresting sites in DNA have the property of trapping a certain fraction of elongating RNA polymerases that pass through, resulting in locked ternary complexes. Cleavage of the nascent transcript by cleavage factors such as GreA or GreB allows the resumption of elongation from the new 3'terminus. GreB releases sequences of up to 9 nucleotides in length. This is Transcription elongation factor GreB from Escherichia coli (strain K12).